Reading from the N-terminus, the 1249-residue chain is Protein lingerer (1249 aa).

The interval 1-66 is disordered; sequence MSTQTRSGGG…VVKAKQPTAE (66 aa). 2 stretches are compositionally biased toward gly residues: residues 7-30 and 38-50; these read SGGG…GAAG and GSTG…GAGG. The UBA domain occupies 84–124; that stretch reads KIQEKIQSLMETTQRSEEEVCCALQECDSDLDRAVIFLLET. Disordered regions lie at residues 132–312, 350–375, 454–506, 549–579, 616–717, 738–922, 1016–1042, 1124–1149, 1164–1186, and 1211–1249; these read TTSK…LKPE, SAGA…ASNV, MPPM…PPTT, YAAA…AVEM, TTGT…TSVS, PYGQ…SLPI, GRFT…TGSG, QQQS…APSM, KQSF…AGTT, and QNMH…TGPN. Over residues 186–209 the composition is skewed to gly residues; it reads NRGGSGNQRSGGPGRGGRAGGYRD. A compositionally biased stretch (basic and acidic residues) spans 210 to 227; it reads GGGDRDRDRDRNGYDKGG. 2 stretches are compositionally biased toward gly residues: residues 228–240 and 248–269; these read EGGG…GGDG and DGPG…GGPR. Residues 350–369 are compositionally biased toward low complexity; it reads SAGAGAQQQQSQQSTQTGVP. Residues 457–494 show a composition bias toward polar residues; sequence MNTSSSLSAEQSQYFSTLSSQNSNLQPTPSAVGFQQQP. 3 stretches are compositionally biased toward low complexity: residues 549–559, 616–639, and 647–664; these read YAAAATQQPPV, TTGT…PATV, and QSQL…APQQ. A compositionally biased stretch (polar residues) spans 678–705; sequence ASSQIMPGQGTTEALSSQNDGLANSYSR. The segment covering 706–717 has biased composition (low complexity); it reads TNASGSVSTSVS. Polar residues-rich tracts occupy residues 738–769 and 777–809; these read PYGQ…TASY and GYNN…NVNA. The segment covering 811–861 has biased composition (low complexity); it reads QPPSSSVTNNVVPNNNTGNSVGGVSNQSNLPVNNNAVNSSSNNNAGGYLSS. The span at 862 to 873 shows a compositional bias: polar residues; it reads QYPVSQTSSAFP. 3 stretches are compositionally biased toward low complexity: residues 874-884, 892-922, and 1023-1034; these read SQQNYQNSSQN, NSNT…SLPI, and NNSSPVSNVPSS. Positions 1124-1138 are enriched in polar residues; that stretch reads QQQSKGQTVANQQSG. Positions 1216–1249 are enriched in polar residues; it reads DSNSSGQRPQNNNQGKTASKQQGYSASTYWTGPN.

The protein resides in the cytoplasm. In terms of biological role, acts in the nervous system to mediate the control of copulatory organs during courtship. The sequence is that of Protein lingerer from Anopheles gambiae (African malaria mosquito).